The sequence spans 1928 residues: Lactase/phlorizin hydrolase (1928 aa).

The N-terminal stretch at 1–21 (MELPWTALFLSTVLLGLSCQG) is a signal peptide. A propeptide spans 22–867 (SDWESDRNFI…LPVRADFTSR (846 aa)) (XBetaGly). At 22-1883 (SDWESDRNFI…LMLGIAEAQT (1862 aa)) the chain is on the extracellular side. The tract at residues 46-289 (NYPPGKQGSD…FIYTLKLEDC (244 aa)) is glycosyl hydrolase-1 1; Region I. A glycosyl hydrolase-1 2; Region II region spans residues 364–856 (VWAAFANQSR…GFSAKKVKRN (493 aa)). 7 N-linked (GlcNAc...) asparagine glycosylation sites follow: asparagine 370, asparagine 514, asparagine 824, asparagine 936, asparagine 948, asparagine 991, and asparagine 1037. Positions 904–1367 (RFRDDFLWGV…DLIANNGMPL (464 aa)) are glycosyl hydrolase-1 3; Region III. Phlorizin hydrolase/Glycosylceramidase activity. Glutamate 1067 (proton donor; for phlorizin hydrolase/Glycosylceramidase activity) is an active-site residue. N-linked (GlcNAc...) asparagine glycosylation is found at asparagine 1176 and asparagine 1240. Glutamate 1274 functions as the Nucleophile; for phlorizin hydrolase/Glycosylceramidase activity in the catalytic mechanism. N-linked (GlcNAc...) asparagine glycans are attached at residues asparagine 1281 and asparagine 1509. The tract at residues 1374-1847 (LYGEFPKGFI…CNGFPDPAQG (474 aa)) is glycosyl hydrolase-1 4; Region IV. Lactase activity. The Proton donor; for lactase activity role is filled by glutamate 1539. Residues asparagine 1657 and asparagine 1684 are each glycosylated (N-linked (GlcNAc...) asparagine). Residue glutamate 1750 is the Nucleophile; for lactase activity of the active site. 2 N-linked (GlcNAc...) asparagine glycosylation sites follow: asparagine 1762 and asparagine 1815. A helical membrane pass occupies residues 1884–1902 (ALYVLFALLLLGACSLAFL). The Cytoplasmic segment spans residues 1903 to 1928 (TYNTGRRSKQGNAQPSQHQLSPISSF).

Belongs to the glycosyl hydrolase 1 family. In terms of assembly, homodimer. Post-translationally, N-glycosylated. As to expression, intestine.

It localises to the apical cell membrane. It carries out the reaction lactose + H2O = beta-D-galactose + D-glucose. It catalyses the reaction phlorizin + H2O = phloretin + beta-D-glucose. The enzyme catalyses D-cellobiose + H2O = beta-D-glucose + D-glucose. The catalysed reaction is quercetin 4'-O-beta-D-glucoside + H2O = quercetin + beta-D-glucose. It carries out the reaction quercetin 3-O-beta-D-glucoside + H2O = quercetin + beta-D-glucose. It catalyses the reaction kaempferol 3-O-beta-D-glucoside + H2O = kaempferol + beta-D-glucose. The enzyme catalyses luteolin 7-O-beta-D-glucoside + H2O = luteolin + beta-D-glucose. The catalysed reaction is luteolin 4'-O-beta-D-glucoside + H2O = luteolin + beta-D-glucose. It carries out the reaction (2S)-naringenin 7-O-beta-D-glucoside + H2O = (2S)-naringenin + beta-D-glucose. It catalyses the reaction eriodictyol-7-O-beta-D-glucoside + H2O = (S)-eriodictyol + beta-D-glucose. The enzyme catalyses apigenin 7-O-beta-D-glucoside + H2O = apigenin + beta-D-glucose. The catalysed reaction is daidzein 7-O-beta-D-glucoside + H2O = daidzein + beta-D-glucose + H(+). It carries out the reaction genistein 7-O-beta-D-glucoside + H2O = genistein + beta-D-glucose. It catalyses the reaction a beta-D-galactosyl-N-acylsphingosine + H2O = a ceramide + beta-D-galactose.. The enzyme catalyses beta-D-glucosyl-(1&lt;-&gt;1')-N-hexadecanoylsphing-4-enine + H2O = N-hexadecanoylsphing-4-enine + beta-D-glucose. The catalysed reaction is beta-D-galactosyl-(1&lt;-&gt;1')-N-hexadecanoylsphing-4-enine + H2O = beta-D-galactose + N-hexadecanoylsphing-4-enine. It carries out the reaction beta-D-galactosyl-(1&lt;-&gt;1')-N-hexadecanoylsphinganine + H2O = N-hexadecanoylsphinganine + beta-D-galactose. It catalyses the reaction beta-D-glucosyl-(1&lt;-&gt;1')-N-hexadecanoylsphinganine + H2O = N-hexadecanoylsphinganine + beta-D-glucose. Its function is as follows. Broad specificity glycosidase of the intestinal brush border membrane that hydrolyzes lactose, the main sugar in mammalian milk, to produce D-glucose and D-galactose. The mature protein is composed of two domains that catalyze the hydrolysis of beta-glucopyranosides and beta-galactopyranosides, with a preference for hydrophilic aglycones (in lactose and cellobiose) for one domain and hydrophobic aglycones (in phlorizin and glycosylceramides) for the other. The sequence is that of Lactase/phlorizin hydrolase from Rattus norvegicus (Rat).